The chain runs to 233 residues: Large ribosomal subunit protein uL1 (233 aa).

Belongs to the universal ribosomal protein uL1 family. As to quaternary structure, part of the 50S ribosomal subunit.

Functionally, binds directly to 23S rRNA. The L1 stalk is quite mobile in the ribosome, and is involved in E site tRNA release. Protein L1 is also a translational repressor protein, it controls the translation of the L11 operon by binding to its mRNA. This Proteus mirabilis (strain HI4320) protein is Large ribosomal subunit protein uL1.